A 218-amino-acid chain; its full sequence is Small ribosomal subunit protein uS3 (218 aa).

The KH type-2 domain maps to 38 to 106 (IREFISKRLS…RVHINILEIK (69 aa)).

It belongs to the universal ribosomal protein uS3 family. As to quaternary structure, part of the 30S ribosomal subunit. Forms a tight complex with proteins S10 and S14.

Binds the lower part of the 30S subunit head. Binds mRNA in the 70S ribosome, positioning it for translation. This Bacillus pumilus (strain SAFR-032) protein is Small ribosomal subunit protein uS3.